The following is a 472-amino-acid chain: 2-oxoglutarate carboxylase small subunit (472 aa).

In terms of domain architecture, Biotin carboxylation spans 1 to 445 (MFKKVLVANR…TTRYLEEHPH (445 aa)). ATP contacts are provided by Lys-115 and Glu-199. The ATP-grasp domain occupies 119-316 (KEVMKRAGVP…IVKWQIRIAA (198 aa)). Arg-291 is an active-site residue.

As to quaternary structure, heterohexadecamer of 8 large subunits and 8 small subunits. The cofactor is Mg(2+). Requires Mn(2+) as cofactor. Co(2+) is required as a cofactor.

The enzyme catalyses hydrogencarbonate + 2-oxoglutarate + ATP = (S)-oxalosuccinate + ADP + phosphate + H(+). The polypeptide is 2-oxoglutarate carboxylase small subunit (Hydrogenobacter thermophilus (strain DSM 6534 / IAM 12695 / TK-6)).